The chain runs to 150 residues: Non-structural protein (150 aa).

The apoptotic activity stretch occupies residues 93-140 (PLFRIRFLLLIMSDSISLTDITISPGTLYSARTLLLRAAVLALTRKPM).

Functionally, disrupts the host mitochondrial membrane potential and induces apoptosis probably by inducing host CASP8 and CASP9. This Bos taurus (Bovine) protein is Non-structural protein.